A 325-amino-acid chain; its full sequence is Elongation factor P--(R)-beta-lysine ligase (325 aa).

76-78 is a binding site for substrate; sequence SPE. Residues 100-102 and Asn109 each bind ATP; that span reads RNE. A substrate-binding site is contributed by Tyr118. Residue 244–245 participates in ATP binding; that stretch reads EL. Glu251 contributes to the substrate binding site. An ATP-binding site is contributed by Gly300.

It belongs to the class-II aminoacyl-tRNA synthetase family. EpmA subfamily. As to quaternary structure, homodimer.

It carries out the reaction D-beta-lysine + L-lysyl-[protein] + ATP = N(6)-((3R)-3,6-diaminohexanoyl)-L-lysyl-[protein] + AMP + diphosphate + H(+). Functionally, with EpmB is involved in the beta-lysylation step of the post-translational modification of translation elongation factor P (EF-P) on 'Lys-34'. Catalyzes the ATP-dependent activation of (R)-beta-lysine produced by EpmB, forming a lysyl-adenylate, from which the beta-lysyl moiety is then transferred to the epsilon-amino group of EF-P 'Lys-34'. The chain is Elongation factor P--(R)-beta-lysine ligase from Salmonella agona (strain SL483).